Here is a 448-residue protein sequence, read N- to C-terminus: Extracellular serine protease (448 aa).

The N-terminal stretch at 1–20 (MKLSHLSLAIISAITLAACG) is a signal peptide. Positions 87 to 109 (KELENQASDDEVDPTKTGVVGNL) are disordered.

The protein belongs to the peptidase S17 family. A divalent metal cation serves as cofactor.

This enzyme is a chymotrypsin-like serine protease. Degrades a variety of substrates present in the skin and hoof of the sheep, including elastin, keratin, fibrinogen and collagen. It seems to play an important role in the pathogenesis of sheep footrot. This chain is Extracellular serine protease (prvA), found in Dichelobacter nodosus (Bacteroides nodosus).